Here is a 224-residue protein sequence, read N- to C-terminus: Large ribosomal subunit protein uL1 (224 aa).

Belongs to the universal ribosomal protein uL1 family. In terms of assembly, part of the 50S ribosomal subunit.

In terms of biological role, binds directly to 23S rRNA. The L1 stalk is quite mobile in the ribosome, and is involved in E site tRNA release. Protein L1 is also a translational repressor protein, it controls the translation of the L11 operon by binding to its mRNA. In Borrelia recurrentis (strain A1), this protein is Large ribosomal subunit protein uL1.